The primary structure comprises 254 residues: Hemin import ATP-binding protein HmuV (254 aa).

An ABC transporter domain is found at 2–239 (LNINQVNINL…DTLSQVWHYD (238 aa)). 34 to 41 (GPNGAGKS) is an ATP binding site.

Belongs to the ABC transporter superfamily. Heme (hemin) importer (TC 3.A.1.14.5) family. In terms of assembly, the complex is composed of two ATP-binding proteins (HmuV), two transmembrane proteins (HmuU) and a solute-binding protein (HmuT).

It is found in the cell inner membrane. In terms of biological role, part of the ABC transporter complex HmuTUV involved in hemin import. Responsible for energy coupling to the transport system. The sequence is that of Hemin import ATP-binding protein HmuV from Shewanella denitrificans (strain OS217 / ATCC BAA-1090 / DSM 15013).